Here is a 956-residue protein sequence, read N- to C-terminus: Plasma membrane ATPase 3 (956 aa).

Residues 1–65 (MGEKPEVLDA…EKKESKFSKF (65 aa)) lie on the Cytoplasmic side of the membrane. Residues 66–85 (LGFMWNPLSWVMEAAAIMAI) traverse the membrane as a helical segment. The Extracellular portion of the chain corresponds to 86–97 (ALANGGGKPPDW). Residues 98–118 (QDFVGIITLLIINSTISFIEE) form a helical membrane-spanning segment. Over 119–247 (NNAGNAAAAL…GHFQKVLTAI (129 aa)) the chain is Cytoplasmic. A helical membrane pass occupies residues 248 to 268 (GNFCICSIAVGMIIEIIVMYP). Over 269-278 (IQHRKYRPGI) the chain is Extracellular. The helical transmembrane segment at 279–300 (DNLLVLLIGGIPIAMPTVLSVT) threads the bilayer. The Cytoplasmic segment spans residues 301-647 (MAIGSHRLAQ…TSRAIFQRMK (347 aa)). Asp-333 functions as the 4-aspartylphosphate intermediate in the catalytic mechanism. 2 residues coordinate Mg(2+): Asp-592 and Asp-596. Residues 648–669 (NYTIYAVSITIRIVLGFMLLAL) traverse the membrane as a helical segment. Over 670–674 (IWQFD) the chain is Extracellular. Residues 675–697 (FPPFMVLIIAILNDGTIMTISKD) form a helical membrane-spanning segment. Residues 698-713 (RVKPSPLPDSWKLAEI) lie on the Cytoplasmic side of the membrane. A helical membrane pass occupies residues 714–734 (FTTGVVLGGYLAMMTVIFFWA). At 735–759 (AYKTNFFPRVFGVSTLEKTATDDFR) the chain is on the extracellular side. Residues 760 to 780 (KLASAIYLQVSTISQALIFVT) traverse the membrane as a helical segment. The Cytoplasmic segment spans residues 781–792 (RSRSWSFMERPG). Residues 793–813 (LLLVVAFFIAQLVATLIAVYA) traverse the membrane as a helical segment. The Extracellular segment spans residues 814-822 (NWSFAAIEG). A helical membrane pass occupies residues 823-843 (IGWGWAGVIWLYNIVFYIPLD). Topologically, residues 844-956 (LXXFLIRYAL…IETIQQAYTV (113 aa)) are cytoplasmic.

This sequence belongs to the cation transport ATPase (P-type) (TC 3.A.3) family. Type IIIA subfamily. In terms of tissue distribution, expressed in roots, stems, leaves from both vegetative and flowering plants, and flowers at early and late stages of development with highest expression levels found in flowers and root tissue.

It localises to the cell membrane. It carries out the reaction ATP + H2O + H(+)(in) = ADP + phosphate + 2 H(+)(out). Its function is as follows. The plasma membrane ATPase of plants and fungi is a hydrogen ion pump. The proton gradient it generates drives the active transport of nutrients by H(+)-symport. The resulting external acidification and/or internal alkinization may mediate growth responses. The sequence is that of Plasma membrane ATPase 3 (PMA3) from Nicotiana plumbaginifolia (Leadwort-leaved tobacco).